A 325-amino-acid polypeptide reads, in one-letter code: 4-diphosphocytidyl-2-C-methyl-D-erythritol kinase (325 aa).

K22 is an active-site residue. 110–120 (PVAGGMAGGSA) serves as a coordination point for ATP. D152 is a catalytic residue. A disordered region spans residues 306 to 325 (PAPGARVLEAVSTPSPGGRS).

It belongs to the GHMP kinase family. IspE subfamily.

The catalysed reaction is 4-CDP-2-C-methyl-D-erythritol + ATP = 4-CDP-2-C-methyl-D-erythritol 2-phosphate + ADP + H(+). It participates in isoprenoid biosynthesis; isopentenyl diphosphate biosynthesis via DXP pathway; isopentenyl diphosphate from 1-deoxy-D-xylulose 5-phosphate: step 3/6. Functionally, catalyzes the phosphorylation of the position 2 hydroxy group of 4-diphosphocytidyl-2C-methyl-D-erythritol. This chain is 4-diphosphocytidyl-2-C-methyl-D-erythritol kinase, found in Kineococcus radiotolerans (strain ATCC BAA-149 / DSM 14245 / SRS30216).